Consider the following 1080-residue polypeptide: Carbamoyl phosphate synthase large chain (1080 aa).

A carboxyphosphate synthetic domain region spans residues 1–403 (MPKRTDLETI…SLQKALRGLE (403 aa)). ATP is bound by residues R129, R169, G175, G176, E208, V210, E215, G241, V242, H243, Q285, and E299. Residues 133–328 (RVAMGEIGLD…IAKVAAKLAV (196 aa)) enclose the ATP-grasp 1 domain. 3 residues coordinate Mg(2+): Q285, E299, and N301. Positions 285, 299, and 301 each coordinate Mn(2+). The tract at residues 404–554 (TGKIGLDPTG…YSTYEDECEA (151 aa)) is oligomerization domain. Residues 555-942 (LPTDRDKIMI…AFARAQEAGG (388 aa)) form a carbamoyl phosphate synthetic domain region. An ATP-grasp 2 domain is found at 679–876 (QQLVDKLGLK…LAKIAARCMA (198 aa)). ATP is bound by residues R715, R754, L756, E761, G787, V788, H789, S790, Q830, and E847. Positions 830, 847, and 849 each coordinate Mg(2+). The Mn(2+) site is built by Q830, E847, and N849. The MGS-like domain maps to 943–1080 (IKAPPLGKAF…LQELHKELEA (138 aa)). The tract at residues 943–1080 (IKAPPLGKAF…LQELHKELEA (138 aa)) is allosteric domain.

It belongs to the CarB family. Composed of two chains; the small (or glutamine) chain promotes the hydrolysis of glutamine to ammonia, which is used by the large (or ammonia) chain to synthesize carbamoyl phosphate. Tetramer of heterodimers (alpha,beta)4. Mg(2+) serves as cofactor. Mn(2+) is required as a cofactor.

The enzyme catalyses hydrogencarbonate + L-glutamine + 2 ATP + H2O = carbamoyl phosphate + L-glutamate + 2 ADP + phosphate + 2 H(+). It catalyses the reaction hydrogencarbonate + NH4(+) + 2 ATP = carbamoyl phosphate + 2 ADP + phosphate + 2 H(+). It functions in the pathway amino-acid biosynthesis; L-arginine biosynthesis; carbamoyl phosphate from bicarbonate: step 1/1. It participates in pyrimidine metabolism; UMP biosynthesis via de novo pathway; (S)-dihydroorotate from bicarbonate: step 1/3. Functionally, large subunit of the glutamine-dependent carbamoyl phosphate synthetase (CPSase). CPSase catalyzes the formation of carbamoyl phosphate from the ammonia moiety of glutamine, carbonate, and phosphate donated by ATP, constituting the first step of 2 biosynthetic pathways, one leading to arginine and/or urea and the other to pyrimidine nucleotides. The large subunit (synthetase) binds the substrates ammonia (free or transferred from glutamine from the small subunit), hydrogencarbonate and ATP and carries out an ATP-coupled ligase reaction, activating hydrogencarbonate by forming carboxy phosphate which reacts with ammonia to form carbamoyl phosphate. In Xanthomonas axonopodis pv. citri (strain 306), this protein is Carbamoyl phosphate synthase large chain.